A 177-amino-acid chain; its full sequence is Large ribosomal subunit protein uL6 (177 aa).

Belongs to the universal ribosomal protein uL6 family. In terms of assembly, part of the 50S ribosomal subunit.

Functionally, this protein binds to the 23S rRNA, and is important in its secondary structure. It is located near the subunit interface in the base of the L7/L12 stalk, and near the tRNA binding site of the peptidyltransferase center. This Rhodospirillum rubrum (strain ATCC 11170 / ATH 1.1.1 / DSM 467 / LMG 4362 / NCIMB 8255 / S1) protein is Large ribosomal subunit protein uL6.